Here is a 659-residue protein sequence, read N- to C-terminus: Hemocyanin subunit B (659 aa).

The first 18 residues, 1–18 (MVAKWCVLAMCLLVAVGA), serve as a signal peptide directing secretion. The Cu cation site is built by histidine 198, histidine 202, and histidine 232. The N-linked (GlcNAc...) asparagine glycan is linked to asparagine 318. Histidine 353, histidine 357, and histidine 393 together coordinate Cu cation. Cysteine 562 and cysteine 609 are disulfide-bonded.

This sequence belongs to the tyrosinase family. Hemocyanin subfamily. In terms of assembly, 36-chain polymer consisting of 6 hexamers, each of which includes 4 different chains, A, B, C and D. As to expression, hemolymph.

The protein resides in the secreted. The protein localises to the extracellular space. Hemocyanins are copper-containing oxygen carriers occurring freely dissolved in the hemolymph of many mollusks and arthropods. The polypeptide is Hemocyanin subunit B (HCB) (Scutigera coleoptrata (House centipede)).